The sequence spans 404 residues: 4-hydroxy-3-methylbut-2-en-1-yl diphosphate synthase (flavodoxin) (404 aa).

Residues Cys310, Cys313, Cys345, and Glu352 each coordinate [4Fe-4S] cluster.

Belongs to the IspG family. Requires [4Fe-4S] cluster as cofactor.

It carries out the reaction (2E)-4-hydroxy-3-methylbut-2-enyl diphosphate + oxidized [flavodoxin] + H2O + 2 H(+) = 2-C-methyl-D-erythritol 2,4-cyclic diphosphate + reduced [flavodoxin]. It functions in the pathway isoprenoid biosynthesis; isopentenyl diphosphate biosynthesis via DXP pathway; isopentenyl diphosphate from 1-deoxy-D-xylulose 5-phosphate: step 5/6. Functionally, converts 2C-methyl-D-erythritol 2,4-cyclodiphosphate (ME-2,4cPP) into 1-hydroxy-2-methyl-2-(E)-butenyl 4-diphosphate. The sequence is that of 4-hydroxy-3-methylbut-2-en-1-yl diphosphate synthase (flavodoxin) from Treponema pallidum (strain Nichols).